Here is a 336-residue protein sequence, read N- to C-terminus: F420-dependent glucose-6-phosphate dehydrogenase (336 aa).

Aspartate 37 serves as a coordination point for coenzyme F420-(gamma-Glu)n. The active-site Proton donor is the histidine 38. Residues threonine 74 and serine 105–glycine 106 each bind coenzyme F420-(gamma-Glu)n. Residue glutamate 107 is the Proton acceptor of the active site. Residues asparagine 110, serine 173–glycine 174, and serine 176–alanine 177 contribute to the coenzyme F420-(gamma-Glu)n site. Residues threonine 191, lysine 194, lysine 255, and arginine 279 each coordinate substrate.

The protein belongs to the F420-dependent glucose-6-phosphate dehydrogenase family. In terms of assembly, homodimer.

The catalysed reaction is oxidized coenzyme F420-(gamma-L-Glu)(n) + D-glucose 6-phosphate + H(+) = 6-phospho-D-glucono-1,5-lactone + reduced coenzyme F420-(gamma-L-Glu)(n). Its function is as follows. Catalyzes the coenzyme F420-dependent oxidation of glucose 6-phosphate (G6P) to 6-phosphogluconolactone. In Beutenbergia cavernae (strain ATCC BAA-8 / DSM 12333 / CCUG 43141 / JCM 11478 / NBRC 16432 / NCIMB 13614 / HKI 0122), this protein is F420-dependent glucose-6-phosphate dehydrogenase.